An 83-amino-acid polypeptide reads, in one-letter code: Short neurotoxin D (83 aa).

The signal sequence occupies residues 1–21 (MKTLLLTLVVVTMVCLDLGYT). 4 cysteine pairs are disulfide-bonded: cysteine 24–cysteine 45, cysteine 38–cysteine 62, cysteine 64–cysteine 75, and cysteine 76–cysteine 81.

The protein belongs to the three-finger toxin family. Short-chain subfamily. Type I alpha-neurotoxin sub-subfamily. As to expression, expressed by the venom gland.

It localises to the secreted. Binds to muscle nicotinic acetylcholine receptor (nAChR) and inhibit acetylcholine from binding to the receptor, thereby impairing neuromuscular transmission. The sequence is that of Short neurotoxin D from Laticauda colubrina (Yellow-lipped sea krait).